We begin with the raw amino-acid sequence, 633 residues long: Carbon monoxide dehydrogenase 2 (633 aa).

[4Fe-4S] cluster is bound by residues cysteine 44, cysteine 53, cysteine 56, cysteine 61, and cysteine 73. Residues histidine 264, cysteine 343, cysteine 453, cysteine 484, and cysteine 525 each contribute to the [Ni-4Fe-5S] cluster site.

Belongs to the Ni-containing carbon monoxide dehydrogenase family. As to quaternary structure, homodimer. [4Fe-4S] cluster serves as cofactor. Requires [Ni-4Fe-5S] cluster as cofactor.

The enzyme catalyses CO + 2 oxidized [2Fe-2S]-[ferredoxin] + H2O = 2 reduced [2Fe-2S]-[ferredoxin] + CO2 + 2 H(+). CODH oxidizes carbon monoxide coupled, via CooF, to the reduction of a hydrogen cation by a hydrogenase (possibly CooH). The polypeptide is Carbon monoxide dehydrogenase 2 (cooS2) (Methanosarcina acetivorans (strain ATCC 35395 / DSM 2834 / JCM 12185 / C2A)).